Here is a 292-residue protein sequence, read N- to C-terminus: Phosphatidylglycerol--prolipoprotein diacylglyceryl transferase (292 aa).

A run of 3 helical transmembrane segments spans residues 18-38 (LFGV…GLLI), 67-87 (LLTW…VLFY), and 105-125 (GGMS…AFCL). Position 150 (Arg-150) interacts with a 1,2-diacyl-sn-glycero-3-phospho-(1'-sn-glycerol). 3 helical membrane passes run 193–213 (QIYE…LLVW), 222–242 (GSVS…VEFV), and 266–286 (GLTM…YLIL).

It belongs to the Lgt family.

The protein localises to the cell inner membrane. The enzyme catalyses L-cysteinyl-[prolipoprotein] + a 1,2-diacyl-sn-glycero-3-phospho-(1'-sn-glycerol) = an S-1,2-diacyl-sn-glyceryl-L-cysteinyl-[prolipoprotein] + sn-glycerol 1-phosphate + H(+). It functions in the pathway protein modification; lipoprotein biosynthesis (diacylglyceryl transfer). In terms of biological role, catalyzes the transfer of the diacylglyceryl group from phosphatidylglycerol to the sulfhydryl group of the N-terminal cysteine of a prolipoprotein, the first step in the formation of mature lipoproteins. The protein is Phosphatidylglycerol--prolipoprotein diacylglyceryl transferase of Cereibacter sphaeroides (strain ATCC 17023 / DSM 158 / JCM 6121 / CCUG 31486 / LMG 2827 / NBRC 12203 / NCIMB 8253 / ATH 2.4.1.) (Rhodobacter sphaeroides).